A 313-amino-acid polypeptide reads, in one-letter code: Probable cell division protein WhiA (313 aa).

The segment at residues 274–308 (SLKELGELVPGGPISKSGVNHRLRKLNAYADELRA) is a DNA-binding region (H-T-H motif).

Belongs to the WhiA family.

Its function is as follows. Involved in cell division and chromosome segregation. The sequence is that of Probable cell division protein WhiA from Limosilactobacillus reuteri subsp. reuteri (strain JCM 1112) (Lactobacillus reuteri).